We begin with the raw amino-acid sequence, 199 residues long: Urease accessory protein UreG (199 aa).

8–15 (GPVGSGKT) provides a ligand contact to GTP.

This sequence belongs to the SIMIBI class G3E GTPase family. UreG subfamily. In terms of assembly, homodimer. UreH, UreF and UreG form a complex that acts as a GTP-hydrolysis-dependent molecular chaperone, activating the urease apoprotein by helping to assemble the nickel containing metallocenter of UreC. The UreE protein probably delivers the nickel.

Its subcellular location is the cytoplasm. Functionally, facilitates the functional incorporation of the urease nickel metallocenter. This process requires GTP hydrolysis, probably effectuated by UreG. This chain is Urease accessory protein UreG, found in Helicobacter pylori (strain P12).